Here is a 346-residue protein sequence, read N- to C-terminus: tRNA-specific 2-thiouridylase MnmA (346 aa).

6–13 is a binding site for ATP; sequence AMSGGTDS. Cys-90 (nucleophile) is an active-site residue. Cys-90 and Cys-187 are disulfide-bonded. Gly-114 contributes to the ATP binding site. Residues 137–139 are interaction with tRNA; that stretch reads KDQ. Cys-187 (cysteine persulfide intermediate) is an active-site residue. An interaction with tRNA region spans residues 292–293; it reads RY.

It belongs to the MnmA/TRMU family.

The protein resides in the cytoplasm. It catalyses the reaction S-sulfanyl-L-cysteinyl-[protein] + uridine(34) in tRNA + AH2 + ATP = 2-thiouridine(34) in tRNA + L-cysteinyl-[protein] + A + AMP + diphosphate + H(+). Catalyzes the 2-thiolation of uridine at the wobble position (U34) of tRNA, leading to the formation of s(2)U34. This Nitratidesulfovibrio vulgaris (strain ATCC 29579 / DSM 644 / CCUG 34227 / NCIMB 8303 / VKM B-1760 / Hildenborough) (Desulfovibrio vulgaris) protein is tRNA-specific 2-thiouridylase MnmA.